The chain runs to 1770 residues: U3 small nucleolar RNA-associated protein 10 (1770 aa).

Transmembrane regions (helical) follow at residues 499–519 (ILGLFIEAIGTGYQAGLFLSS) and 528–548 (LTFLLRVIVSPSAPIALRLLA). The stretch at 1730 to 1768 (MVPIIAELLEDDNEEVESEVRGGLVRVMENVLGEPFDRY) is one HEAT repeat.

Belongs to the HEATR1/UTP10 family. In terms of assembly, component of the ribosomal small subunit (SSU) processome.

The protein resides in the nucleus. It is found in the nucleolus. The protein localises to the membrane. Its function is as follows. Involved in nucleolar processing of pre-18S ribosomal RNA. Involved in ribosome biosynthesis. This Candida glabrata (strain ATCC 2001 / BCRC 20586 / JCM 3761 / NBRC 0622 / NRRL Y-65 / CBS 138) (Yeast) protein is U3 small nucleolar RNA-associated protein 10.